The following is a 298-amino-acid chain: Leucine-rich repeat-containing protein 38 (298 aa).

An N-terminal signal peptide occupies residues 1–31 (MSLCVAPRHPTGAAAALGLGSLLVLLGPGRA). 2 disulfides stabilise this stretch: C32/C38 and C36/C46. The LRRNT domain occupies 32–60 (CPAGCACTDPHTVDCRDRGLPSVPDPFPL). At 32-251 (CPAGCACTDP…ECKFSLSLTD (220 aa)) the chain is on the extracellular side. 5 LRR repeats span residues 61-82 (DVRKLLVAGNRIQQIPEDFFIF), 85-106 (DLVYLDFRNNSLRSLEEGTFSG), 109-130 (KLAFLDLSYNNLTQLGAGAFRS), 133-154 (RLVKLSLANNHLAGVHEAAFES), and 157-177 (SLQVLELNDNNLRSLNVAALD). Residue N119 is glycosylated (N-linked (GlcNAc...) asparagine). The LRRCT domain maps to 190–245 (NPWLCDCDFAHLFSWIQENTSKLPKGLDAIQCSLPMEDRRVALRELSEASFSECKF). Cystine bridges form between C194/C221 and C196/C243. A helical membrane pass occupies residues 252-272 (LFIIIFSGVAVSIAAIISSFF). Over 273–298 (LATVVQCFQRCAPNKDTEDEDDDEDD) the chain is Cytoplasmic.

As to quaternary structure, interacts with KCNMA1.

The protein localises to the cell membrane. In terms of biological role, auxiliary protein of the large-conductance, voltage and calcium-activated potassium channel (BK alpha). Modulates gating properties by producing a marked shift in the BK channel's voltage dependence of activation in the hyperpolarizing direction, and in the absence of calcium. The sequence is that of Leucine-rich repeat-containing protein 38 (Lrrc38) from Mus musculus (Mouse).